The following is a 115-amino-acid chain: Tyrosine-protein phosphatase 19 (115 aa).

Residues 1-115 (WLMIVEQKCR…ETGSDAPMVV (115 aa)) form the Tyrosine-protein phosphatase domain. D83 is a substrate binding site.

Belongs to the protein-tyrosine phosphatase family.

It catalyses the reaction O-phospho-L-tyrosyl-[protein] + H2O = L-tyrosyl-[protein] + phosphate. The chain is Tyrosine-protein phosphatase 19 (STY-19) from Styela plicata (Wrinkled sea squirt).